The following is a 235-amino-acid chain: uncharacterized protein (235 aa).

Residues 1 to 98 (MDTKLSVTGA…NKKNTLHYSK (98 aa)) form a disordered region. Glycyl lysine isopeptide (Lys-Gly) (interchain with G-Cter in ubiquitin) cross-links involve residues lysine 16 and lysine 35. Basic residues predominate over residues 38-50 (NGNKKRNKNRNRN). Positions 51 to 60 (KKTETKEQNE) are enriched in basic and acidic residues.

This is an uncharacterized protein from Saccharomyces cerevisiae (strain ATCC 204508 / S288c) (Baker's yeast).